A 438-amino-acid polypeptide reads, in one-letter code: Transposon Ty2-F Gag polyprotein (438 aa).

Polar residues-rich tracts occupy residues 1 to 11, 19 to 39, and 49 to 60; these read MESQQLHQNPH, ASVT…SASN, and KVNSQQETTPGT. Disordered stretches follow at residues 1–86, 366–397, and 419–438; these read MESQ…GQYQ, VSRT…AKAH, and SSQY…TERI. The tract at residues 295–397 is RNA-binding; sequence ENNINVSDRL…SSKPRAAKAH (103 aa). The span at 369–381 shows a compositional bias: low complexity; that stretch reads TSPNTTNTKVTTR.

As to quaternary structure, homotrimer.

It localises to the cytoplasm. In terms of biological role, capsid protein (CA) is the structural component of the virus-like particle (VLP), forming the shell that encapsulates the retrotransposons dimeric RNA genome. The particles are assembled from trimer-clustered units and there are holes in the capsid shells that allow for the diffusion of macromolecules. CA also has nucleocapsid-like chaperone activity, promoting primer tRNA(i)-Met annealing to the multipartite primer-binding site (PBS), dimerization of Ty2 RNA and initiation of reverse transcription. This chain is Transposon Ty2-F Gag polyprotein (TY2A-F), found in Saccharomyces cerevisiae (strain ATCC 204508 / S288c) (Baker's yeast).